Reading from the N-terminus, the 129-residue chain is D-ribose pyranase (129 aa).

Residue His20 is the Proton donor of the active site. Substrate-binding positions include Asp28, His96, and 118–120 (YAN).

It belongs to the RbsD / FucU family. RbsD subfamily. In terms of assembly, homodecamer.

Its subcellular location is the cytoplasm. The enzyme catalyses beta-D-ribopyranose = beta-D-ribofuranose. Its pathway is carbohydrate metabolism; D-ribose degradation; D-ribose 5-phosphate from beta-D-ribopyranose: step 1/2. Catalyzes the interconversion of beta-pyran and beta-furan forms of D-ribose. The chain is D-ribose pyranase from Halalkalibacterium halodurans (strain ATCC BAA-125 / DSM 18197 / FERM 7344 / JCM 9153 / C-125) (Bacillus halodurans).